We begin with the raw amino-acid sequence, 316 residues long: Probable thioesterase lcsE (316 aa).

It belongs to the AMT4 thioesterase family.

The protein operates within secondary metabolite biosynthesis. Probable thioesterase; part of the gene cluster that mediates the biosynthesis of the lipopeptide antibiotics leucinostatins that show extensive biological activities, including antimalarial, antiviral, antibacterial, antifungal, and antitumor activities, as well as phytotoxic. Leucinostatin A contains nine amino acid residues, including the unusual amino acid 4-methyl-L-proline (MePro), 2-amino-6-hydroxy-4-methyl-8-oxodecanoic acid (AHyMeOA), 3-hydroxyleucine (HyLeu), alpha-aminoisobutyric acid (AIB), beta-Ala, a 4-methylhex-2-enoic acid at the N-terminus as well as a N1,N1-dimethylpropane-1,2-diamine (DPD) at the C-terminus. The biosynthesis of leucinostatins is probably initiated with the assembly of 4-methylhex-2-enoic acid by a reducing PKS. Two reducing polyketide synthases, lcsB and lcsC, have been identified in the cluster and it is not clear which is the one that assembles 4-methylhex-2-enoic acid since both contain KS, AT, DH, cMT, ER, KR and ACP domains. The polyketide residue might be transferred to the NRPS lcsA, mediated by two additional enzymes, the acyl-CoA ligase lcsD and the thioesterase lcsE. The linear polyketide carboxylic acid, which is released from PKS, is converted to a CoA thioester by lcsD, and then lcsE hydrolyzes the thiol bond and shuttles the polyketide intermediate to lcsA. The C domain of the first module catalyzed the condensation of 4-methylhex-2-enoic acid and MePro carried by domain A1, followed by successive condensations of nine amino acids to trigger the elongation of the linear peptide. A5 and A6 domains of lcsA are proposed to incorporate leucine, A2 AHyMeOA, and A3 incorporates HyLeu. A4, A7 and A8 incorporate AIB. The AHyMeOA in leucinostatin A activated by the A2 might be produced by the second PKS (lcsB or lcsC) present within the cluster. The MePro is probably produced via leucine cyclization and may originate from a separate pathway, independent of the cluster. Another nonproteinogenic amino acid, beta-Ala, could be produced by an aspartic acid decarboxylase also localized outside of the cluster. Two candidates are VFPBJ_01400 and VFPBJ_10476. The final peptide scaffold may be released by the NAD(P)H-dependent thioester reductase (TE) at the C-terminal region of lcsA. Transamination of the lcsA product by the transaminase lcsP may produce DPD at the C-terminus. Further hydroxylation steps performed alternatively by the cytochrome P450 monooxygenases lcsI, lcsK and lcsN then yield the non-methylated leucinostatins precursor. It is also possible that leucines can be hydroxylated prior to their incorporation into the peptide. Varying extents of methylation then lead to the formation of leucinostatins A and B. This Purpureocillium lilacinum (Paecilomyces lilacinus) protein is Probable thioesterase lcsE.